Consider the following 492-residue polypeptide: NADH-quinone oxidoreductase subunit N (492 aa).

14 helical membrane-spanning segments follow: residues 5-25 (PMTA…AWLI), 37-57 (TYFI…IDAL), 72-92 (VVDP…AVSI), 104-124 (LYEG…LVMI), 129-149 (FLTL…AIAL), 164-184 (YVLG…LYGA), 205-225 (VVLL…MGAV), 239-259 (PTAM…AWGL), 276-295 (MLVI…GIVQ), 302-322 (LAYS…AGVV), 337-357 (MFYS…VMLL), 380-400 (FAFV…AVGF), 414-434 (GLTW…FYYL), and 466-486 (VAVL…LNAI).

It belongs to the complex I subunit 2 family. In terms of assembly, NDH-1 is composed of 14 different subunits. Subunits NuoA, H, J, K, L, M, N constitute the membrane sector of the complex.

It localises to the cell inner membrane. It carries out the reaction a quinone + NADH + 5 H(+)(in) = a quinol + NAD(+) + 4 H(+)(out). Its function is as follows. NDH-1 shuttles electrons from NADH, via FMN and iron-sulfur (Fe-S) centers, to quinones in the respiratory chain. The immediate electron acceptor for the enzyme in this species is believed to be ubiquinone. Couples the redox reaction to proton translocation (for every two electrons transferred, four hydrogen ions are translocated across the cytoplasmic membrane), and thus conserves the redox energy in a proton gradient. This is NADH-quinone oxidoreductase subunit N from Paraburkholderia phymatum (strain DSM 17167 / CIP 108236 / LMG 21445 / STM815) (Burkholderia phymatum).